The following is a 512-amino-acid chain: Serine/threonine-protein kinase BSK1 (512 aa).

The N-myristoyl glycine moiety is linked to residue Gly2. A disordered region spans residues Phe8–Gly48. A compositionally biased stretch (gly residues) spans Gly38 to Gly48. The Protein kinase domain occupies Asp76–Gln331. ATP is bound by residues Ser82 to Val90 and Lys104. The Proton acceptor role is filled by Asp198. Residue Ser230 is modified to Phosphoserine. A coiled-coil region spans residues Ala483–Gly508.

It belongs to the protein kinase superfamily. Ser/Thr protein kinase family. Interacts with BRI1. Interacts with ASK7/BIN2, BSK5, BSK6, BSK8 and BSK11. Interacts with FLS2. Post-translationally, phosphorylated at Ser-230 by BRI1 upon brassinolide (BL) treatment. Phosphorylation at Ser-230 weakens the interaction between BSK1 and BRI1. Phosphorylated by ASK7/BIN2 and ASK9/BIL2.

The protein resides in the cell membrane. It catalyses the reaction L-seryl-[protein] + ATP = O-phospho-L-seryl-[protein] + ADP + H(+). The enzyme catalyses L-threonyl-[protein] + ATP = O-phospho-L-threonyl-[protein] + ADP + H(+). In terms of biological role, serine/threonine kinase that acts as a positive regulator of brassinosteroid (BR) signaling downstream of the receptor kinase BRI1. Mediates signal transduction from BRI1 by functioning as substrate of BRI1. Functions as a positive regulator of plant immunity. May be involved in the regulation of pattern-triggered immunity (PTI) downstream of the flagellin receptor FLS2. Possesses kinase activity in vitro. Kinase activity is required for its function in innate immunity. The chain is Serine/threonine-protein kinase BSK1 from Arabidopsis thaliana (Mouse-ear cress).